The sequence spans 425 residues: Histidine--tRNA ligase (425 aa).

This sequence belongs to the class-II aminoacyl-tRNA synthetase family. In terms of assembly, homodimer.

The protein localises to the cytoplasm. The enzyme catalyses tRNA(His) + L-histidine + ATP = L-histidyl-tRNA(His) + AMP + diphosphate + H(+). The chain is Histidine--tRNA ligase from Tolumonas auensis (strain DSM 9187 / NBRC 110442 / TA 4).